Here is a 312-residue protein sequence, read N- to C-terminus: Ribonuclease HIII (312 aa).

An RNase H type-2 domain is found at 95–311 (FNCIGSDEAG…REKAQKILKP (217 aa)). 3 residues coordinate a divalent metal cation: D101, E102, and D206.

The protein belongs to the RNase HII family. RnhC subfamily. It depends on Mn(2+) as a cofactor. The cofactor is Mg(2+).

The protein resides in the cytoplasm. It carries out the reaction Endonucleolytic cleavage to 5'-phosphomonoester.. Endonuclease that specifically degrades the RNA of RNA-DNA hybrids. The chain is Ribonuclease HIII from Staphylococcus aureus (strain MSSA476).